The sequence spans 66 residues: Large ribosomal subunit protein bL35 (66 aa).

This sequence belongs to the bacterial ribosomal protein bL35 family.

The chain is Large ribosomal subunit protein bL35 from Borrelia garinii subsp. bavariensis (strain ATCC BAA-2496 / DSM 23469 / PBi) (Borreliella bavariensis).